Consider the following 598-residue polypeptide: EF-hand and coiled-coil domain-containing protein 1 (598 aa).

Positions methionine 1 to arginine 22 are disordered. An EF-hand domain is found at glycine 54–arginine 89. 3 disordered regions span residues alanine 96 to glutamate 127, arginine 175 to glutamate 198, and tyrosine 326 to proline 411. Over residues arginine 175 to proline 185 the composition is skewed to basic residues. The stretch at aspartate 196 to glutamate 303 forms a coiled coil. A compositionally biased stretch (basic and acidic residues) spans proline 343 to aspartate 359. The span at serine 394–tryptophan 404 shows a compositional bias: acidic residues. Positions threonine 479 to serine 533 form a coiled coil.

This is EF-hand and coiled-coil domain-containing protein 1 (EFCC1) from Homo sapiens (Human).